The following is a 278-amino-acid chain: HTH-type transcriptional activator RhaS (278 aa).

Positions 174–272 (NLLLAWLEDH…NWSPRDIRQG (99 aa)) constitute an HTH araC/xylS-type domain. 2 DNA-binding regions (H-T-H motif) span residues 191 to 212 (DAVA…KQQT) and 239 to 262 (VTDI…HREF).

In terms of assembly, binds DNA as a dimer.

It is found in the cytoplasm. Functionally, activates expression of the rhaBAD and rhaT operons. The protein is HTH-type transcriptional activator RhaS of Shigella boydii serotype 18 (strain CDC 3083-94 / BS512).